Here is a 365-residue protein sequence, read N- to C-terminus: Phospho-N-acetylmuramoyl-pentapeptide-transferase (365 aa).

10 helical membrane passes run 29-49 (VGGL…IIVW), 73-93 (GTPT…VIIW), 97-117 (SNIY…LGLV), 133-153 (ILNK…IMFI), 171-191 (IVCK…VGTS), 202-222 (GLVI…TWVV), 242-262 (LVVV…FNSY), 266-286 (IFMG…VSIL), 291-311 (YLLL…IFQV), and 341-361 (IVVR…VIFI).

This sequence belongs to the glycosyltransferase 4 family. MraY subfamily. It depends on Mg(2+) as a cofactor.

The protein resides in the cell inner membrane. The enzyme catalyses UDP-N-acetyl-alpha-D-muramoyl-L-alanyl-gamma-D-glutamyl-meso-2,6-diaminopimeloyl-D-alanyl-D-alanine + di-trans,octa-cis-undecaprenyl phosphate = di-trans,octa-cis-undecaprenyl diphospho-N-acetyl-alpha-D-muramoyl-L-alanyl-D-glutamyl-meso-2,6-diaminopimeloyl-D-alanyl-D-alanine + UMP. It functions in the pathway cell wall biogenesis; peptidoglycan biosynthesis. Functionally, catalyzes the initial step of the lipid cycle reactions in the biosynthesis of the cell wall peptidoglycan: transfers peptidoglycan precursor phospho-MurNAc-pentapeptide from UDP-MurNAc-pentapeptide onto the lipid carrier undecaprenyl phosphate, yielding undecaprenyl-pyrophosphoryl-MurNAc-pentapeptide, known as lipid I. This Blochmanniella floridana protein is Phospho-N-acetylmuramoyl-pentapeptide-transferase.